Consider the following 493-residue polypeptide: Ketol-acid reductoisomerase (NADP(+)) (493 aa).

Residues 14 to 208 (LDQLGRCRFM…GGHRAGVLES (195 aa)) form the KARI N-terminal Rossmann domain. NADP(+) contacts are provided by residues 45–48 (CGAQ), R68, R76, S78, and 108–110 (DKQ). Residue H132 is part of the active site. NADP(+) is bound at residue G158. 2 consecutive KARI C-terminal knotted domains span residues 209–345 (SFVA…APKG) and 346–486 (ENIK…MTDM). D217, E221, E390, and E394 together coordinate Mg(2+). Position 415 (S415) interacts with substrate.

The protein belongs to the ketol-acid reductoisomerase family. Mg(2+) is required as a cofactor.

The enzyme catalyses (2R)-2,3-dihydroxy-3-methylbutanoate + NADP(+) = (2S)-2-acetolactate + NADPH + H(+). It carries out the reaction (2R,3R)-2,3-dihydroxy-3-methylpentanoate + NADP(+) = (S)-2-ethyl-2-hydroxy-3-oxobutanoate + NADPH + H(+). The protein operates within amino-acid biosynthesis; L-isoleucine biosynthesis; L-isoleucine from 2-oxobutanoate: step 2/4. It participates in amino-acid biosynthesis; L-valine biosynthesis; L-valine from pyruvate: step 2/4. Its function is as follows. Involved in the biosynthesis of branched-chain amino acids (BCAA). Catalyzes an alkyl-migration followed by a ketol-acid reduction of (S)-2-acetolactate (S2AL) to yield (R)-2,3-dihydroxy-isovalerate. In the isomerase reaction, S2AL is rearranged via a Mg-dependent methyl migration to produce 3-hydroxy-3-methyl-2-ketobutyrate (HMKB). In the reductase reaction, this 2-ketoacid undergoes a metal-dependent reduction by NADPH to yield (R)-2,3-dihydroxy-isovalerate. The polypeptide is Ketol-acid reductoisomerase (NADP(+)) (Histophilus somni (strain 2336) (Haemophilus somnus)).